Consider the following 170-residue polypeptide: Transmembrane protein 252 (170 aa).

2 consecutive transmembrane segments (helical) span residues 8–28 and 40–60; these read ILCA…AFFI and LIAA…GIFW. The tract at residues 112-147 is disordered; that stretch reads CPAEREASGIPPPLYTETGLEFQDGNDSHPEAPPSY.

The protein localises to the membrane. The sequence is that of Transmembrane protein 252 (TMEM252) from Pongo abelii (Sumatran orangutan).